Reading from the N-terminus, the 199-residue chain is NAD(P)H dehydrogenase (quinone) (199 aa).

The Flavodoxin-like domain maps to 4-190 (VLVLYYSTYG…DGARYQGRHV (187 aa)). FMN contacts are provided by residues 10–15 (STYGHI) and 78–80 (TRY). Residue tyrosine 12 participates in NAD(+) binding. Substrate is bound at residue tryptophan 98. Residues 113–119 (SSASQHG) and histidine 134 contribute to the FMN site.

Belongs to the WrbA family. FMN is required as a cofactor.

It carries out the reaction a quinone + NADH + H(+) = a quinol + NAD(+). The enzyme catalyses a quinone + NADPH + H(+) = a quinol + NADP(+). This Methylobacterium sp. (strain 4-46) protein is NAD(P)H dehydrogenase (quinone).